The primary structure comprises 252 residues: dITP/XTP pyrophosphatase (252 aa).

Position 7–12 (7–12 (THNEGK)) interacts with substrate. The Proton acceptor role is filled by D74. D74 serves as a coordination point for Mg(2+). Substrate is bound by residues S75 and 193–196 (FGYD). Residues 202–229 (DDQPAGRVSTEPDHEGEPLTSAEMTPAE) form a disordered region. Substrate-binding positions include K230 and 235-236 (HR).

Belongs to the HAM1 NTPase family. In terms of assembly, homodimer. Mg(2+) is required as a cofactor.

It carries out the reaction XTP + H2O = XMP + diphosphate + H(+). The catalysed reaction is dITP + H2O = dIMP + diphosphate + H(+). It catalyses the reaction ITP + H2O = IMP + diphosphate + H(+). In terms of biological role, pyrophosphatase that catalyzes the hydrolysis of nucleoside triphosphates to their monophosphate derivatives, with a high preference for the non-canonical purine nucleotides XTP (xanthosine triphosphate), dITP (deoxyinosine triphosphate) and ITP. Seems to function as a house-cleaning enzyme that removes non-canonical purine nucleotides from the nucleotide pool, thus preventing their incorporation into DNA/RNA and avoiding chromosomal lesions. This Bifidobacterium longum (strain DJO10A) protein is dITP/XTP pyrophosphatase.